The sequence spans 97 residues: YcgL domain-containing protein Psyr_1564 (97 aa).

Positions 3 to 87 (RICSIYRSPK…AEDDYIEHLP (85 aa)) constitute a YcgL domain.

This chain is YcgL domain-containing protein Psyr_1564, found in Pseudomonas syringae pv. syringae (strain B728a).